The chain runs to 359 residues: Nicotinate-nucleotide--dimethylbenzimidazole phosphoribosyltransferase (359 aa).

The active-site Proton acceptor is Glu318.

Belongs to the CobT family. In terms of assembly, homodimer.

The enzyme catalyses 5,6-dimethylbenzimidazole + nicotinate beta-D-ribonucleotide = alpha-ribazole 5'-phosphate + nicotinate + H(+). It functions in the pathway nucleoside biosynthesis; alpha-ribazole biosynthesis; alpha-ribazole from 5,6-dimethylbenzimidazole: step 1/2. Its function is as follows. Catalyzes the synthesis of alpha-ribazole-5'-phosphate from nicotinate mononucleotide (NAMN) and 5,6-dimethylbenzimidazole (DMB). The polypeptide is Nicotinate-nucleotide--dimethylbenzimidazole phosphoribosyltransferase (Escherichia coli O81 (strain ED1a)).